Consider the following 433-residue polypeptide: Histidinol dehydrogenase (433 aa).

NAD(+) is bound by residues Tyr-133, Gln-194, and Asn-217. Residues Ser-240, Gln-262, and His-265 each coordinate substrate. Positions 262 and 265 each coordinate Zn(2+). Active-site proton acceptor residues include Glu-330 and His-331. 4 residues coordinate substrate: His-331, Asp-364, Glu-418, and His-423. A Zn(2+)-binding site is contributed by Asp-364. Zn(2+) is bound at residue His-423.

It belongs to the histidinol dehydrogenase family. Zn(2+) serves as cofactor.

The catalysed reaction is L-histidinol + 2 NAD(+) + H2O = L-histidine + 2 NADH + 3 H(+). The protein operates within amino-acid biosynthesis; L-histidine biosynthesis; L-histidine from 5-phospho-alpha-D-ribose 1-diphosphate: step 9/9. Its function is as follows. Catalyzes the sequential NAD-dependent oxidations of L-histidinol to L-histidinaldehyde and then to L-histidine. This chain is Histidinol dehydrogenase, found in Hydrogenovibrio crunogenus (strain DSM 25203 / XCL-2) (Thiomicrospira crunogena).